The sequence spans 371 residues: UPF0284 protein tll2306 (371 aa).

It belongs to the UPF0284 family.

In Thermosynechococcus vestitus (strain NIES-2133 / IAM M-273 / BP-1), this protein is UPF0284 protein tll2306.